The following is a 494-amino-acid chain: UDP-N-acetylmuramoyl-L-alanyl-D-glutamate--L-lysine ligase (494 aa).

UDP-N-acetyl-alpha-D-muramoyl-L-alanyl-D-glutamate is bound at residue Ser30. Position 110–116 (110–116) interacts with ATP; it reads GTNGKTS. UDP-N-acetyl-alpha-D-muramoyl-L-alanyl-D-glutamate-binding positions include 152–153, Ser179, and Arg187; that span reads TT. Position 219 is an N6-carboxylysine (Lys219). Residues 406–409 carry the L-lysine recognition motif motif; the sequence is DNPA.

It belongs to the MurCDEF family. MurE subfamily. In terms of processing, carboxylation is probably crucial for Mg(2+) binding and, consequently, for the gamma-phosphate positioning of ATP.

It localises to the cytoplasm. The enzyme catalyses UDP-N-acetyl-alpha-D-muramoyl-L-alanyl-D-glutamate + L-lysine + ATP = UDP-N-acetyl-alpha-D-muramoyl-L-alanyl-gamma-D-glutamyl-L-lysine + ADP + phosphate + H(+). It participates in cell wall biogenesis; peptidoglycan biosynthesis. Catalyzes the addition of L-lysine to the nucleotide precursor UDP-N-acetylmuramoyl-L-alanyl-D-glutamate (UMAG) in the biosynthesis of bacterial cell-wall peptidoglycan. The chain is UDP-N-acetylmuramoyl-L-alanyl-D-glutamate--L-lysine ligase from Staphylococcus haemolyticus (strain JCSC1435).